A 209-amino-acid chain; its full sequence is High frequency lysogenization protein HflD homolog (209 aa).

Residues 79–121 (QGLNAELTRYTLSLMVLERKLNSAKGAMDTLGDRIAGLQRQLD) are a coiled coil.

It belongs to the HflD family.

It is found in the cytoplasm. The protein localises to the cell inner membrane. This chain is High frequency lysogenization protein HflD homolog, found in Enterobacter sp. (strain 638).